Consider the following 60-residue polypeptide: Cytochrome c oxidase assembly protein COX14 homolog (60 aa).

A helical membrane pass occupies residues 10–32; the sequence is VGYRLFSGSMMLLTVYGGYLCVV.

It localises to the mitochondrion membrane. Functionally, plays a role in the assembly or stability of the cytochrome c oxidase complex (COX). The protein is Cytochrome c oxidase assembly protein COX14 homolog of Danio rerio (Zebrafish).